Here is a 188-residue protein sequence, read N- to C-terminus: Elongation factor P-like protein (188 aa).

Belongs to the elongation factor P family.

The sequence is that of Elongation factor P-like protein from Alcanivorax borkumensis (strain ATCC 700651 / DSM 11573 / NCIMB 13689 / SK2).